A 532-amino-acid polypeptide reads, in one-letter code: Exopolysaccharide phosphotransferase CpsY (532 aa).

This sequence belongs to the stealth family.

In Mycobacterium bovis (strain ATCC BAA-935 / AF2122/97), this protein is Exopolysaccharide phosphotransferase CpsY (cpsY).